The sequence spans 299 residues: Dye-decolorizing peroxidase YfeX (299 aa).

H215 contacts heme.

The protein belongs to the DyP-type peroxidase family. It depends on heme b as a cofactor.

It localises to the cytoplasm. Its function is as follows. Has both general peroxidase activity and dye-decolorizing activity. Can catalyze the oxidation of 2,2'-azino-bis(3-ethylbenzothiazoline-6-sulphonic acid) (ABTS), and the phenolic compounds guaiacol and catechol. Also decolorizes the anthraquinone dye reactive blue 19 (RB19). This is Dye-decolorizing peroxidase YfeX from Escherichia coli O157:H7.